The primary structure comprises 384 residues: Putative aminohydrolase MTH_994 (384 aa).

Zn(2+) is bound by residues His-60, His-62, His-207, and Asp-291.

This sequence belongs to the metallo-dependent hydrolases superfamily. ATZ/TRZ family.

In Methanothermobacter thermautotrophicus (strain ATCC 29096 / DSM 1053 / JCM 10044 / NBRC 100330 / Delta H) (Methanobacterium thermoautotrophicum), this protein is Putative aminohydrolase MTH_994.